A 1047-amino-acid polypeptide reads, in one-letter code: Probable alpha-mannosidase At5g66150 (1047 aa).

Positions 1-27 (MEKPGMSLLKGSLCVIVFLLLLSLVES) are cleaved as a signal peptide. Residues H56, D58, and D178 each coordinate Zn(2+). 3 N-linked (GlcNAc...) asparagine glycosylation sites follow: N280, N287, and N345. H419 contacts Zn(2+). 2 disulfides stabilise this stretch: C455–C465 and C476–C484. N-linked (GlcNAc...) asparagine glycosylation is found at N480, N508, N541, N605, N606, N668, N780, and N857. Residues C855 and C860 are joined by a disulfide bond.

This sequence belongs to the glycosyl hydrolase 38 family. As to quaternary structure, homodimer. Zn(2+) is required as a cofactor.

The protein resides in the vacuole. The enzyme catalyses Hydrolysis of terminal, non-reducing alpha-D-mannose residues in alpha-D-mannosides.. Its function is as follows. Liberates mannose from p-nitrophenyl-alpha-D-mannoside in vitro. The polypeptide is Probable alpha-mannosidase At5g66150 (Arabidopsis thaliana (Mouse-ear cress)).